We begin with the raw amino-acid sequence, 974 residues long: MSDQKFISIRGAREHNLKNVDLDLPRDKLIVMTGLSGSGKSSLAFDTIYAEGQRRYVESLSAYARQFLEMMQKPDVDQIDGLSPAISIEQKTTSRNPRSTVGTVTEIYDYMRLLFARVGIPYSPATGLPIESQTVSQMVDRVIALEEGTRLYILAPIVRGRKGEYRKELAELQKKGFQRVKVDGTFYEIADVPPLDKKYKHDIDVVVDRVVVRPDLSTRLADSLETCLKLADGLAIAEFADKPLPVGETAEGGSANKSANETHERILFSEKFACPVSGFTIPEIEPRLFSFNNPFGACPTCDGLGTQQAIDPNLIIPDESAALKDGAVAPWARSSSPYYNQTLEALGKAYGFKVSARWSELSEEARQAILYGTKGREITFHYDDGLRSYQTTKPFEGVIPNLERRWKETDSAWSREEIERFMASTPCPACNGYRLKPEALSVKIGKKHIGEITEMSIRKADAWFRDIDGSFNEKQREIAARILKAIRERLQFLNNVGLDYLTLARNSGTLSGGESQRIRLASQIGSGLTGVLYVLDEPSIGLHQRDNARLLDTLRHLRDLGNTVIVVEHDEDAILTADYVVDIGPAAGVHGGKVIAQGSPQDIMANTNSLTGKYLSGAMEVAVPAERRKISKTKRLRVVGARGNNLKNVSADIPLGTFTAVTGVSGGGKSTFLIETLFKAASRRIMGSREHPAEHDRIEGLEFLDKVIDIDQSPIGRTPRSNPATYTGAFTPIRDWFAGLPEAKARGYQPGRFSFNVKGGRCEACQGDGVIKIEMHFLPDVYVTCDVCHGKRYNRETLDVLFKGKSIADVLDMTVEEGAEFFSAVPAVRDKLETLVKVGLGYIKVGQQATTLSGGEAQRVKLAKELSRRATGRTLYILDEPTTGLHFHDVAKLLEVLHELVEQGNTVVVIEHNLEVIKTADWVIDLGPEGGDGGGEIVAVGRPEDIVQEKRSYTGQFLKELLERRPKRSSQAAE.

An ATP-binding site is contributed by 34–41 (GLSGSGKS). 2 consecutive ABC transporter domains span residues 331–610 (WARS…TNSL) and 630–959 (ISKT…QFLK). 663 to 670 (GVSGGGKS) contacts ATP. The segment at 762–788 (CEACQGDGVIKIEMHFLPDVYVTCDVC) adopts a C4-type zinc-finger fold.

It belongs to the ABC transporter superfamily. UvrA family. As to quaternary structure, forms a heterotetramer with UvrB during the search for lesions.

The protein resides in the cytoplasm. Its function is as follows. The UvrABC repair system catalyzes the recognition and processing of DNA lesions. UvrA is an ATPase and a DNA-binding protein. A damage recognition complex composed of 2 UvrA and 2 UvrB subunits scans DNA for abnormalities. When the presence of a lesion has been verified by UvrB, the UvrA molecules dissociate. In Brucella abortus (strain 2308), this protein is UvrABC system protein A.